The primary structure comprises 569 residues: 4-hydroxy-7-methoxy-3-oxo-3,4-dihydro-2H-1,4-benzoxazin-2-yl glucoside beta-D-glucosidase 1a, chloroplastic (569 aa).

The N-terminal 50 residues, 1 to 50 (MALLAAATLNPTTHLSLRSRAGRNSENLWLRSAASSQKSKGRFCNLTIRA), are a transit peptide targeting the chloroplast. A beta-D-glucoside contacts are provided by residues Gln-92, His-194, and 239-240 (NE). Glu-240 functions as the Proton donor in the catalytic mechanism. Residues Cys-259 and Cys-265 are joined by a disulfide bond. Residues Tyr-383, Glu-456, Trp-504, 511–512 (EW), and Phe-520 each bind a beta-D-glucoside. Catalysis depends on Glu-456, which acts as the Nucleophile.

This sequence belongs to the glycosyl hydrolase 1 family. Homo- and heterohexamers. Expressed in young seedlings early after germination.

It is found in the plastid. It localises to the chloroplast. It carries out the reaction Hydrolysis of terminal, non-reducing beta-D-glucosyl residues with release of beta-D-glucose.. It catalyses the reaction DIMBOA beta-D-glucoside + H2O = DIMBOA + D-glucose. The catalysed reaction is DIBOA beta-D-glucoside + H2O = DIBOA + D-glucose. Functionally, acts in defense of young plant parts against pests via the production of hydroxamic acids from hydroxamic acid glucosides. Enzymatic activity is highly correlated with plant growth. The preferred substrate is DIMBOA-beta-D-glucoside. This Triticum aestivum (Wheat) protein is 4-hydroxy-7-methoxy-3-oxo-3,4-dihydro-2H-1,4-benzoxazin-2-yl glucoside beta-D-glucosidase 1a, chloroplastic (GLU1A).